The chain runs to 453 residues: MTQLSVVILAAGKGTRMYSDLPKVLHPIAGKPMVKHVIDTAKQLSAKQIHLIYGHGGDLLQQRLSAEPVNWVLQAEQLGTGHAMQQAAPFFADDENILMLYGDAPLITATTLEKLIAAKPENGIALLTVVLDNPTGYGRIIRENGSVVAIVEQKDANPEQLKIQEINTGVMVASGASFKKWLSQLDNNNAQGEYYITDVIAMANRDGYKVEAVQATNLMEVEGANNRLQLAALERYYQKIQAEKLLLAGVTIIDPARFDLRGTVTHGKDVVIDVNVILEGSIQLGNNVKIGAGSVLKNVVLGDNVEIKPYSVLEDSVIGESADVGPFARLRPGTELAAKAHVGNFVEIKKSTIGEGSKVGHLTYIGDSEIGANVNIGAGTITCNYDGANKFKTIIGDNVFVGSDTQLVAPVTVASGATIGAGSTITKDVAADELVITRVPQRHIQGWQRPTKK.

The interval Met-1–Arg-227 is pyrophosphorylase. Residues Leu-9–Gly-12, Lys-23, Gln-74, Gly-79–Thr-80, Tyr-101–Asp-103, Gly-138, Glu-152, Asn-167, and Asn-225 each bind UDP-N-acetyl-alpha-D-glucosamine. Residue Asp-103 coordinates Mg(2+). Asn-225 provides a ligand contact to Mg(2+). The interval Leu-228–Ala-248 is linker. The N-acetyltransferase stretch occupies residues Gly-249–Lys-453. Arg-331 and Lys-349 together coordinate UDP-N-acetyl-alpha-D-glucosamine. Catalysis depends on His-361, which acts as the Proton acceptor. The UDP-N-acetyl-alpha-D-glucosamine site is built by Tyr-364 and Asn-375. Acetyl-CoA contacts are provided by residues Ala-378, Asn-384–Tyr-385, Ser-403, Ala-421, and Arg-438.

It in the N-terminal section; belongs to the N-acetylglucosamine-1-phosphate uridyltransferase family. This sequence in the C-terminal section; belongs to the transferase hexapeptide repeat family. Homotrimer. It depends on Mg(2+) as a cofactor.

Its subcellular location is the cytoplasm. It catalyses the reaction alpha-D-glucosamine 1-phosphate + acetyl-CoA = N-acetyl-alpha-D-glucosamine 1-phosphate + CoA + H(+). It carries out the reaction N-acetyl-alpha-D-glucosamine 1-phosphate + UTP + H(+) = UDP-N-acetyl-alpha-D-glucosamine + diphosphate. The protein operates within nucleotide-sugar biosynthesis; UDP-N-acetyl-alpha-D-glucosamine biosynthesis; N-acetyl-alpha-D-glucosamine 1-phosphate from alpha-D-glucosamine 6-phosphate (route II): step 2/2. It participates in nucleotide-sugar biosynthesis; UDP-N-acetyl-alpha-D-glucosamine biosynthesis; UDP-N-acetyl-alpha-D-glucosamine from N-acetyl-alpha-D-glucosamine 1-phosphate: step 1/1. It functions in the pathway bacterial outer membrane biogenesis; LPS lipid A biosynthesis. Functionally, catalyzes the last two sequential reactions in the de novo biosynthetic pathway for UDP-N-acetylglucosamine (UDP-GlcNAc). The C-terminal domain catalyzes the transfer of acetyl group from acetyl coenzyme A to glucosamine-1-phosphate (GlcN-1-P) to produce N-acetylglucosamine-1-phosphate (GlcNAc-1-P), which is converted into UDP-GlcNAc by the transfer of uridine 5-monophosphate (from uridine 5-triphosphate), a reaction catalyzed by the N-terminal domain. The sequence is that of Bifunctional protein GlmU from Glaesserella parasuis serovar 5 (strain SH0165) (Haemophilus parasuis).